The sequence spans 311 residues: Probable manganese-dependent inorganic pyrophosphatase (311 aa).

Mn(2+) contacts are provided by H9, D13, D15, D77, H99, and D151.

It belongs to the PPase class C family. Requires Mn(2+) as cofactor.

The protein localises to the cytoplasm. It catalyses the reaction diphosphate + H2O = 2 phosphate + H(+). The chain is Probable manganese-dependent inorganic pyrophosphatase from Streptococcus equi subsp. equi (strain 4047).